The chain runs to 87 residues: UPF0250 protein NE1487 (87 aa).

This sequence belongs to the UPF0250 family.

This Nitrosomonas europaea (strain ATCC 19718 / CIP 103999 / KCTC 2705 / NBRC 14298) protein is UPF0250 protein NE1487.